Reading from the N-terminus, the 200-residue chain is Protein GrpE (200 aa).

Residues 1-25 (MMSKQNKKDWKKFKDEHKEEHKVEN) are compositionally biased toward basic and acidic residues. The segment at 1 to 52 (MMSKQNKKDWKKFKDEHKEEHKVENEILEEETDEESQHQEPALGHPSYTALE) is disordered.

This sequence belongs to the GrpE family. In terms of assembly, homodimer.

The protein localises to the cytoplasm. In terms of biological role, participates actively in the response to hyperosmotic and heat shock by preventing the aggregation of stress-denatured proteins, in association with DnaK and GrpE. It is the nucleotide exchange factor for DnaK and may function as a thermosensor. Unfolded proteins bind initially to DnaJ; upon interaction with the DnaJ-bound protein, DnaK hydrolyzes its bound ATP, resulting in the formation of a stable complex. GrpE releases ADP from DnaK; ATP binding to DnaK triggers the release of the substrate protein, thus completing the reaction cycle. Several rounds of ATP-dependent interactions between DnaJ, DnaK and GrpE are required for fully efficient folding. This is Protein GrpE from Legionella pneumophila subsp. pneumophila (strain Philadelphia 1 / ATCC 33152 / DSM 7513).